The primary structure comprises 237 residues: Proteasome subunit beta type-1-B (237 aa).

The protein belongs to the peptidase T1B family. As to quaternary structure, the 26S proteasome consists of a 20S proteasome core and two 19S regulatory subunits. The 20S proteasome core is composed of 28 subunits that are arranged in four stacked rings, resulting in a barrel-shaped structure. The two end rings are each formed by seven alpha subunits, and the two central rings are each formed by seven beta subunits. The catalytic chamber with the active sites is on the inside of the barrel.

The protein resides in the cytoplasm. It localises to the nucleus. Non-catalytic component of the proteasome, a multicatalytic proteinase complex which is characterized by its ability to cleave peptides with Arg, Phe, Tyr, Leu, and Glu adjacent to the leaving group at neutral or slightly basic pH. The proteasome has an ATP-dependent proteolytic activity. The sequence is that of Proteasome subunit beta type-1-B (psmb1-B) from Carassius auratus (Goldfish).